The following is a 710-amino-acid chain: Methionine--tRNA ligase (710 aa).

A 'HIGH' region motif is present at residues 16–26 (PYANGAFHIGH). Zn(2+) contacts are provided by Cys147, Cys150, Cys160, and Cys163. The 'KMSKS' region motif lies at 350-354 (KMSKS). Residue Lys353 coordinates ATP. Positions 604 to 710 (DFAKIDLRIA…PGAEPGMRVG (107 aa)) constitute a tRNA-binding domain.

The protein belongs to the class-I aminoacyl-tRNA synthetase family. MetG type 1 subfamily. As to quaternary structure, homodimer. Requires Zn(2+) as cofactor.

Its subcellular location is the cytoplasm. It catalyses the reaction tRNA(Met) + L-methionine + ATP = L-methionyl-tRNA(Met) + AMP + diphosphate. In terms of biological role, is required not only for elongation of protein synthesis but also for the initiation of all mRNA translation through initiator tRNA(fMet) aminoacylation. In Herminiimonas arsenicoxydans, this protein is Methionine--tRNA ligase.